The sequence spans 1437 residues: Histone-lysine N-methyltransferase NSD3 (1437 aa).

Disordered stretches follow at residues 121-157 and 181-252; these read PHEILEKPSPPQPPPPPSVPQTVIPKKTGSPEIKLKI and QASE…PVQP. The span at 128 to 139 shows a compositional bias: pro residues; the sequence is PSPPQPPPPPSV. A Phosphoserine modification is found at serine 150. Positions 154–157 match the KIKL motif; the sequence is KLKI. Residues 187–201 show a composition bias toward basic residues; it reads KSKHESRKEKRKKSN. Positions 202–248 are enriched in basic and acidic residues; sequence KHDSSRSEERKSHKIPKLEPEEQNRPNERVDTVSEKPREEPVLKEEA. Residues lysine 218 and lysine 245 each participate in a glycyl lysine isopeptide (Lys-Gly) (interchain with G-Cter in SUMO2) cross-link. The PWWP 1 domain occupies 270 to 333; that stretch reads VGDLVWSKVG…EKRVREYKGH (64 aa). 2 disordered regions span residues 344 to 365 and 406 to 465; these read TKQASNHSEKQKIRKPRPQRER and AKKS…EPPP. Residue lysine 413 forms a Glycyl lysine isopeptide (Lys-Gly) (interchain with G-Cter in SUMO2) linkage. Residues 425 to 445 show a composition bias toward polar residues; that stretch reads VLNTQPEQTNAGEVASSLSST. Serine 457 carries the phosphoserine modification. Residues lysine 502 and lysine 532 each participate in a glycyl lysine isopeptide (Lys-Gly) (interchain with G-Cter in SUMO2) cross-link. The segment at 540–696 is disordered; it reads QDRLIISTPN…DSSLSRRGTG (157 aa). A compositionally biased stretch (polar residues) spans 546 to 571; that stretch reads STPNQRNEKPTQSVSSPEATSGSTGS. The segment covering 583-595 has biased composition (basic and acidic residues); sequence TRSESEKSTEVVP. Residues serine 585, serine 587, and serine 590 each carry the phosphoserine modification. Lysine 628 is covalently cross-linked (Glycyl lysine isopeptide (Lys-Gly) (interchain with G-Cter in SUMO2)). Serine 655 carries the phosphoserine modification. Residues 682–692 show a composition bias toward polar residues; sequence DVQSMDSSLSR. PHD-type zinc fingers lie at residues 701-748, 749-805, and 862-955; these read DTVC…CKTG, QHPC…CSME, and VGFC…CKAG. Residue lysine 790 is modified to N6-acetyllysine. The region spanning 960–1022 is the PWWP 2 domain; sequence YKQIVWVKLG…QGRVFPYVEG (63 aa). Residues 1033–1069 are a coiled coil; the sequence is INKTFKKALEEAAKRFQELKAQRESKEALEIEKNSRK. Residues 1093–1143 form the AWS domain; sequence SEIPRCNCKPADENPCGLESECLNRMLQYECHPQVCPAGDRCQNQCFTKRL. Residues 1145 to 1262 form the SET domain; that stretch reads PDAEIIKTER…AGMELTFNYN (118 aa). Lysine 1151 is covalently cross-linked (Glycyl lysine isopeptide (Lys-Gly) (interchain with G-Cter in SUMO2)). Residues 1269–1285 enclose the Post-SET domain; that stretch reads GRTECHCGADNCSGFLG. Residues 1321–1368 form a PHD-type 4; atypical zinc finger; sequence EDYCFQCGDGGELVMCDKKDCPKAYHLLCLNLTQPPYGKWECPWHQCD.

It belongs to the class V-like SAM-binding methyltransferase superfamily. Histone-lysine methyltransferase family. SET2 subfamily. In terms of assembly, interacts with BRD4. Interacts (via KIKL motif) with BRD3 (via NET domain). Highly expressed in brain, heart and skeletal muscle. Expressed at lower level in liver and lung.

It localises to the nucleus. It is found in the chromosome. The catalysed reaction is L-lysyl(4)-[histone H3] + 2 S-adenosyl-L-methionine = N(6),N(6)-dimethyl-L-lysyl(4)-[histone H3] + 2 S-adenosyl-L-homocysteine + 2 H(+). It catalyses the reaction L-lysyl(27)-[histone H3] + 2 S-adenosyl-L-methionine = N(6),N(6)-dimethyl-L-lysyl(27)-[histone H3] + 2 S-adenosyl-L-homocysteine + 2 H(+). Histone methyltransferase. Preferentially dimethylates 'Lys-4' and 'Lys-27' of histone H3 forming H3K4me2 and H3K27me2. H3 'Lys-4' methylation represents a specific tag for epigenetic transcriptional activation, while 'Lys-27' is a mark for transcriptional repression. The sequence is that of Histone-lysine N-methyltransferase NSD3 from Homo sapiens (Human).